Consider the following 523-residue polypeptide: GMP synthase [glutamine-hydrolyzing] (523 aa).

Residues 8-205 enclose the Glutamine amidotransferase type-1 domain; it reads KILILDFGSQ…VVNICGCETK (198 aa). Residue Cys-85 is the Nucleophile of the active site. Active-site residues include His-179 and Glu-181. The GMPS ATP-PPase domain occupies 206-398; it reads WTAENIIEDA…LGLPAEMLNR (193 aa). Residue 233–239 participates in ATP binding; it reads SGGVDSS.

In terms of assembly, homodimer.

It carries out the reaction XMP + L-glutamine + ATP + H2O = GMP + L-glutamate + AMP + diphosphate + 2 H(+). It functions in the pathway purine metabolism; GMP biosynthesis; GMP from XMP (L-Gln route): step 1/1. In terms of biological role, catalyzes the synthesis of GMP from XMP. The protein is GMP synthase [glutamine-hydrolyzing] of Glaesserella parasuis serovar 5 (strain SH0165) (Haemophilus parasuis).